Reading from the N-terminus, the 394-residue chain is MDSQGKKVVVCDNGTGFVKCGYAGSNFPEHIFPALVGRPVIRSTAKVGNIEIKDLMVGDEASELRSMLEVNYPMENGIVRNWDDMKHLWDYTFGPEKLNIDTRDCKILLTEPPMNPTKNREKIVEVMFETYQFSGVYVAIQAVLTLYAQGLLTGVVVDSGDGVTHICPVYEGFSLPHLTRRLDIAGRDITRYLIKLLLLRGYAFNHSADFETVRMIKEKLCYVGYNIEQEQKLALETTVLVESYTLPDGRVIKVGGERFEAPEALFQPHLINVEGVGVAELLFNTIQAADIDTRAEFYKHIVLSGGSTMYPGLPSRLERELKQLYLERVLKGDVEKLSKFKIRIEDPPRRKHMVFLGGAVLADIMKDKDNFWMTRQEYQEKGTRVLEKLGVTVR.

ATP is bound by residues 160 to 162 (GDG), 214 to 218 (RMIKE), and 305 to 310 (GGSTMY).

It belongs to the actin family. ARP2 subfamily. As to quaternary structure, component of the Arp2/3 complex composed of actr2/arp2, actr3/arp3, arpc1 (arpc1a or arpc1b), arpc2, arpc3, arpc4 and arpc5.

It is found in the cytoplasm. The protein resides in the cytoskeleton. Its subcellular location is the cell projection. The protein localises to the nucleus. In terms of biological role, ATP-binding component of the Arp2/3 complex, a multiprotein complex that mediates actin polymerization upon stimulation by nucleation-promoting factor (NPF). The Arp2/3 complex mediates the formation of branched actin networks in the cytoplasm, providing the force for cell motility. Seems to contact the pointed end of the daughter actin filament. In addition to its role in the cytoplasmic cytoskeleton, the Arp2/3 complex also promotes actin polymerization in the nucleus, thereby regulating gene transcription and repair of damaged DNA. The Arp2/3 complex promotes homologous recombination (HR) repair in response to DNA damage by promoting nuclear actin polymerization, leading to drive motility of double-strand breaks (DSBs). The protein is Actin-related protein 2-A (actr2-a) of Xenopus laevis (African clawed frog).